The following is a 245-amino-acid chain: 8-amino-3,8-dideoxy-manno-octulosonate cytidylyltransferase (245 aa).

This sequence belongs to the KdsB family.

It localises to the cytoplasm. The catalysed reaction is 8-amino-3,8-dideoxy-alpha-D-manno-octulosonate + CTP = CMP-8-amino-3,8-dideoxy-alpha-D-manno-oct-2-ulosonate + diphosphate. The protein operates within bacterial outer membrane biogenesis; lipopolysaccharide biosynthesis. Its function is as follows. Activates KDO8N (a required 8-carbon sugar) for incorporation into bacterial lipopolysaccharide in the Shewanella genus. In Shewanella amazonensis (strain ATCC BAA-1098 / SB2B), this protein is 8-amino-3,8-dideoxy-manno-octulosonate cytidylyltransferase.